The sequence spans 150 residues: Avidin-related protein 6 (150 aa).

The signal sequence occupies residues 1–24 (MVHATSPLLLLLLLSLALVAPGLS). Residues 26 to 147 (RKCSLTGEWD…GYNNFTRQRT (122 aa)) enclose the Avidin-like domain. C28 and C105 are joined by a disulfide. Biotin-binding residues include N36 and S40. N54 is a glycosylation site (N-linked (GlcNAc...) asparagine). The biotin site is built by Y57, T59, and D63. N-linked (GlcNAc...) asparagine glycosylation is present at N93. The biotin site is built by S95, S99, and N140. N141 carries N-linked (GlcNAc...) asparagine glycosylation.

The protein belongs to the avidin/streptavidin family. As to quaternary structure, homotetramer. Post-translationally, glycosylated.

Its subcellular location is the secreted. Its function is as follows. Forms a strong non-covalent specific complex with biotin. This is Avidin-related protein 6 (AVR6) from Gallus gallus (Chicken).